A 1435-amino-acid polypeptide reads, in one-letter code: Putative ATP-dependent RNA helicase YLR419W (1435 aa).

Disordered stretches follow at residues 1 to 57 and 226 to 251; these read MAKK…STAS and LSSH…KNSH. Phosphoserine is present on S9. A compositionally biased stretch (basic and acidic residues) spans 31–43; that stretch reads KGQEPEPEDDKRA. Residues 45-57 show a composition bias toward polar residues; it reads QQSNRAKVTSTAS. The 42-residue stretch at 365–406 folds into the UBA domain; it reads PLSTRMIVERLTEIGVSSDEALLALQQNDMNENEAAGFLTRE. The region spanning 430–531 is the RWD domain; the sequence is QELESLESIY…EWLKENISKI (102 aa). The interval 543 to 566 is disordered; that stretch reads DSKGAINKRNISNGKRSINNSSSR. Over residues 551–566 the composition is skewed to polar residues; the sequence is RNISNGKRSINNSSSR. Positions 614-782 constitute a Helicase ATP-binding domain; the sequence is IDIINKNEVV…FPGLATCHIE (169 aa). Position 627-634 (627-634) interacts with ATP; that stretch reads GETGSGKS. The DEAH box signature appears at 729 to 732; it reads DEVH. S816 is modified (phosphoserine). Residues 845-1020 enclose the Helicase C-terminal domain; the sequence is LLCQVVEYVH…SLYLSVKAMG (176 aa).

It belongs to the DEAD box helicase family. DEAH subfamily.

The protein localises to the cytoplasm. The catalysed reaction is ATP + H2O = ADP + phosphate + H(+). Probable ATP-binding RNA helicase. The polypeptide is Putative ATP-dependent RNA helicase YLR419W (Saccharomyces cerevisiae (strain ATCC 204508 / S288c) (Baker's yeast)).